The sequence spans 206 residues: Large ribosomal subunit protein uL4 (206 aa).

The tract at residues 43 to 94 (ARSGNRAQKDREQVKHTTKKPWRQKGTGRARAGMSSSPLWRGGGRIFPNSPE) is disordered. Positions 58–70 (HTTKKPWRQKGTG) are enriched in basic residues.

It belongs to the universal ribosomal protein uL4 family. In terms of assembly, part of the 50S ribosomal subunit.

Functionally, one of the primary rRNA binding proteins, this protein initially binds near the 5'-end of the 23S rRNA. It is important during the early stages of 50S assembly. It makes multiple contacts with different domains of the 23S rRNA in the assembled 50S subunit and ribosome. Its function is as follows. Forms part of the polypeptide exit tunnel. This is Large ribosomal subunit protein uL4 from Polynucleobacter asymbioticus (strain DSM 18221 / CIP 109841 / QLW-P1DMWA-1) (Polynucleobacter necessarius subsp. asymbioticus).